The primary structure comprises 249 residues: Coproheme decarboxylase (249 aa).

Residues Arg-131, 145–149 (YPMDK), His-172, Gln-185, and Ser-223 each bind Fe-coproporphyrin III. Tyr-145 is a catalytic residue.

It belongs to the ChdC family. Type 1 subfamily. It depends on Fe-coproporphyrin III as a cofactor.

It catalyses the reaction Fe-coproporphyrin III + 2 H2O2 + 2 H(+) = heme b + 2 CO2 + 4 H2O. The enzyme catalyses Fe-coproporphyrin III + H2O2 + H(+) = harderoheme III + CO2 + 2 H2O. The catalysed reaction is harderoheme III + H2O2 + H(+) = heme b + CO2 + 2 H2O. It functions in the pathway porphyrin-containing compound metabolism; protoheme biosynthesis. In terms of biological role, involved in coproporphyrin-dependent heme b biosynthesis. Catalyzes the decarboxylation of Fe-coproporphyrin III (coproheme) to heme b (protoheme IX), the last step of the pathway. The reaction occurs in a stepwise manner with a three-propionate intermediate. The chain is Coproheme decarboxylase from Halalkalibacterium halodurans (strain ATCC BAA-125 / DSM 18197 / FERM 7344 / JCM 9153 / C-125) (Bacillus halodurans).